Consider the following 236-residue polypeptide: Uridylate kinase (236 aa).

9 to 12 (KISG) contributes to the ATP binding site. Gly51 contributes to the UMP binding site. Residues Gly52 and Arg56 each coordinate ATP. Residues Asp71 and 132-139 (TGNSHFTT) contribute to the UMP site. Residues Tyr166 and Asp169 each contribute to the ATP site.

The protein belongs to the UMP kinase family. As to quaternary structure, homohexamer.

Its subcellular location is the cytoplasm. The catalysed reaction is UMP + ATP = UDP + ADP. The protein operates within pyrimidine metabolism; CTP biosynthesis via de novo pathway; UDP from UMP (UMPK route): step 1/1. Inhibited by UTP. Catalyzes the reversible phosphorylation of UMP to UDP. This chain is Uridylate kinase, found in Mycoplasmoides gallisepticum (strain R(low / passage 15 / clone 2)) (Mycoplasma gallisepticum).